Consider the following 487-residue polypeptide: 1,4-beta-D-glucan cellobiohydrolase CEL6A (487 aa).

A signal peptide spans 1-17; sequence MASKLFLAAALLQGALS. A CBM1 domain is found at 27-63; it reads ACAAQWGQCGGQDYTGPTCCQSGSTCVVSNQWYSQCL. Cystine bridges form between C35–C52 and C46–C62. The segment covering 64–117 has biased composition (low complexity); sequence PGSSNPTTTSRTSTSSSSSTSRTSSSTSRPPSSVPTTPTSVPPTITTTPTTTPT. The interval 64–127 is disordered; it reads PGSSNPTTTS…GGSGPGTTAS (64 aa). W175 and D177 together coordinate substrate. D216 is an active-site residue. The Proton donor role is filled by D262. Positions 307, 310, 346, 407, 435, and 439 each coordinate substrate. The active-site Proton acceptor is D441.

Belongs to the glycosyl hydrolase 6 (cellulase B) family.

The protein localises to the secreted. It catalyses the reaction Hydrolysis of (1-&gt;4)-beta-D-glucosidic linkages in cellulose and cellotetraose, releasing cellobiose from the non-reducing ends of the chains.. Exoglucanase that plays an important function in biomass degradation by catalyzing the hydrolysis of the non-reducing end beta-1,4-glucosidic linkages in cellulose and cellotetraose to release cellobiose. Shows higher hydrolytic activities on phosphoric acid-swollen cellulose (PSC), beta-glucan, and cellooligosaccharide derivatives than on cellulose, of which the best substrates were cellooligosaccharides. The protein is 1,4-beta-D-glucan cellobiohydrolase CEL6A of Pyricularia oryzae (strain 70-15 / ATCC MYA-4617 / FGSC 8958) (Rice blast fungus).